The chain runs to 99 residues: Protein Tat (99 aa).

The interval 1 to 20 is disordered; the sequence is MELVDPNLDPWNHPGSQPTT. The tract at residues 1-24 is interaction with human CREBBP; the sequence is MELVDPNLDPWNHPGSQPTTPCTR. Positions 1–48 are transactivation; sequence MELVDPNLDPWNHPGSQPTTPCTRCYCKWCCFHCYWCFTTKGLGISYG. 3 residues coordinate Zn(2+): cysteine 22, cysteine 25, and cysteine 27. Residues 22 to 37 form a cysteine-rich region; the sequence is CTRCYCKWCCFHCYWC. Lysine 28 carries the N6-acetyllysine; by host PCAF modification. Residues cysteine 30, histidine 33, cysteine 34, and cysteine 37 each contribute to the Zn(2+) site. The tract at residues 38–48 is core; the sequence is FTTKGLGISYG. Residues 48 to 99 form a disordered region; sequence GRKKRRQRPRTPQSSQIHQDFVPKQPISQARGNPTGPKESKKEVESKAKTDP. Residues 49–57 carry the Nuclear localization signal, RNA-binding (TAR), and protein transduction motif; that stretch reads RKKRRQRPR. The interaction with the host capping enzyme RNGTT stretch occupies residues 49–86; that stretch reads RKKRRQRPRTPQSSQIHQDFVPKQPISQARGNPTGPKE. Lysine 50 and lysine 51 each carry N6-acetyllysine; by host EP300 and GCN5L2. An asymmetric dimethylarginine; by host PRMT6 mark is found at arginine 52 and arginine 53. Lysine 71 is covalently cross-linked (Glycyl lysine isopeptide (Lys-Gly) (interchain with G-Cter in ubiquitin)). The span at 85-99 shows a compositional bias: basic and acidic residues; it reads KESKKEVESKAKTDP.

It belongs to the lentiviruses Tat family. In terms of assembly, interacts with host CCNT1. Associates with the P-TEFb complex composed at least of Tat, P-TEFb (CDK9 and CCNT1), TAR RNA, RNA Pol II. Recruits the HATs CREBBP, TAF1/TFIID, EP300, PCAF and GCN5L2. Interacts with host KAT5/Tip60; this interaction targets the latter to degradation. Interacts with the host deacetylase SIRT1. Interacts with host capping enzyme RNGTT; this interaction stimulates RNGTT. Binds to host KDR, and to the host integrins ITGAV/ITGB3 and ITGA5/ITGB1. Interacts with host KPNB1/importin beta-1 without previous binding to KPNA1/importin alpha-1. Interacts with EIF2AK2. Interacts with host nucleosome assembly protein NAP1L1; this interaction may be required for the transport of Tat within the nucleus, since the two proteins interact at the nuclear rim. Interacts with host C1QBP/SF2P32; this interaction involves lysine-acetylated Tat. Interacts with the host chemokine receptors CCR2, CCR3 and CXCR4. Interacts with host DPP4/CD26; this interaction may trigger an anti-proliferative effect. Interacts with host LDLR. Interacts with the host extracellular matrix metalloproteinase MMP1. Interacts with host PRMT6; this interaction mediates Tat's methylation. Interacts with, and is ubiquitinated by MDM2/Hdm2. Interacts with host PSMC3 and HTATIP2. Interacts with STAB1; this interaction may overcome SATB1-mediated repression of IL2 and IL2RA (interleukin) in T cells by binding to the same domain than HDAC1. Interacts (when acetylated) with human CDK13, thereby increasing HIV-1 mRNA splicing and promoting the production of the doubly spliced HIV-1 protein Nef. Interacts with host TBP; this interaction modulates the activity of transcriptional pre-initiation complex. Interacts with host RELA. Interacts with host PLSCR1; this interaction negatively regulates Tat transactivation activity by altering its subcellular distribution. In terms of processing, asymmetrical arginine methylation by host PRMT6 seems to diminish the transactivation capacity of Tat and affects the interaction with host CCNT1. Post-translationally, acetylation by EP300, CREBBP, GCN5L2/GCN5 and PCAF regulates the transactivation activity of Tat. EP300-mediated acetylation of Lys-50 promotes dissociation of Tat from the TAR RNA through the competitive binding to PCAF's bromodomain. In addition, the non-acetylated Tat's N-terminus can also interact with PCAF. PCAF-mediated acetylation of Lys-28 enhances Tat's binding to CCNT1. Lys-50 is deacetylated by SIRT1. Polyubiquitination by host MDM2 does not target Tat to degradation, but activates its transactivation function and fosters interaction with CCNT1 and TAR RNA. In terms of processing, phosphorylated by EIF2AK2 on serine and threonine residues adjacent to the basic region important for TAR RNA binding and function. Phosphorylation of Tat by EIF2AK2 is dependent on the prior activation of EIF2AK2 by dsRNA.

Its subcellular location is the host nucleus. The protein resides in the host nucleolus. It localises to the host cytoplasm. The protein localises to the secreted. Transcriptional activator that increases RNA Pol II processivity, thereby increasing the level of full-length viral transcripts. Recognizes a hairpin structure at the 5'-LTR of the nascent viral mRNAs referred to as the transactivation responsive RNA element (TAR) and recruits the cyclin T1-CDK9 complex (P-TEFb complex) that will in turn hyperphosphorylate the RNA polymerase II to allow efficient elongation. The CDK9 component of P-TEFb and other Tat-activated kinases hyperphosphorylate the C-terminus of RNA Pol II that becomes stabilized and much more processive. Other factors such as HTATSF1/Tat-SF1, SUPT5H/SPT5, and HTATIP2 are also important for Tat's function. Besides its effect on RNA Pol II processivity, Tat induces chromatin remodeling of proviral genes by recruiting the histone acetyltransferases (HATs) CREBBP, EP300 and PCAF to the chromatin. This also contributes to the increase in proviral transcription rate, especially when the provirus integrates in transcriptionally silent region of the host genome. To ensure maximal activation of the LTR, Tat mediates nuclear translocation of NF-kappa-B by interacting with host RELA. Through its interaction with host TBP, Tat may also modulate transcription initiation. Tat can reactivate a latently infected cell by penetrating in it and transactivating its LTR promoter. In the cytoplasm, Tat is thought to act as a translational activator of HIV-1 mRNAs. In terms of biological role, extracellular circulating Tat can be endocytosed by surrounding uninfected cells via the binding to several surface receptors such as CD26, CXCR4, heparan sulfate proteoglycans (HSPG) or LDLR. Neurons are rarely infected, but they internalize Tat via their LDLR. Through its interaction with nuclear HATs, Tat is potentially able to control the acetylation-dependent cellular gene expression. Modulates the expression of many cellular genes involved in cell survival, proliferation or in coding for cytokines or cytokine receptors. Tat plays a role in T-cell and neurons apoptosis. Tat induced neurotoxicity and apoptosis probably contribute to neuroAIDS. Circulating Tat also acts as a chemokine-like and/or growth factor-like molecule that binds to specific receptors on the surface of the cells, affecting many cellular pathways. In the vascular system, Tat binds to ITGAV/ITGB3 and ITGA5/ITGB1 integrins dimers at the surface of endothelial cells and competes with bFGF for heparin-binding sites, leading to an excess of soluble bFGF. This Homo sapiens (Human) protein is Protein Tat.